The chain runs to 130 residues: Small ribosomal subunit protein uS11 (130 aa).

This sequence belongs to the universal ribosomal protein uS11 family. As to quaternary structure, part of the 30S ribosomal subunit. Interacts with proteins S7 and S18. Binds to IF-3.

In terms of biological role, located on the platform of the 30S subunit, it bridges several disparate RNA helices of the 16S rRNA. Forms part of the Shine-Dalgarno cleft in the 70S ribosome. This chain is Small ribosomal subunit protein uS11, found in Thermotoga maritima (strain ATCC 43589 / DSM 3109 / JCM 10099 / NBRC 100826 / MSB8).